The sequence spans 54 residues: Toxin AnmTx Cj 1c-1 (54 aa).

The N-terminal stretch at 1–7 (MLNKRGV) is a signal peptide. Intrachain disulfides connect Cys9–Cys50, Cys11–Cys41, and Cys33–Cys51. Residue Glu53 is modified to Glutamic acid 1-amide.

It belongs to the sea anemone sodium channel inhibitory toxin family. Type I subfamily. In terms of processing, contains 3 disulfide bonds.

The protein resides in the secreted. It localises to the nematocyst. In vivo, induces marked paralysis on shrimps (C.multidentata) at 10-20 seconds after injection and a weak toxicity when injected into insect larvae (M.domestica). The protein is Toxin AnmTx Cj 1c-1 of Epiactis japonica (Sea anemone).